Consider the following 118-residue polypeptide: Elongin-B (118 aa).

Met1 bears the N-acetylmethionine mark. One can recognise a Ubiquitin-like domain in the interval 1–79; the sequence is MDVFLMIRRH…QAPATVGLAF (79 aa). Position 84 is a phosphothreonine (Thr84). The disordered stretch occupies residues 91–118; the sequence is EPFSSPPELPDVMKPQDSGGSANEQAVQ. Phosphoserine occurs at positions 108 and 111. Positions 108–118 are enriched in polar residues; it reads SGGSANEQAVQ.

The protein belongs to the Elongin B family. In terms of assembly, heterotrimer of an A (ELOA, ELOA2 or ELOA3P), ELOB and ELOC subunit. The elongin BC complex interacts with EPOP; leading to recruit the elongin BC complex to Polycomb group (PcG) target genes, thereby restricting excessive activity of the PRC2/EED-EZH2 complex. Component of multiple cullin-RING E3 ubiquitin-protein ligase complexes composed of Elongin BC (ELOB and ELOC), a cullin (either CUL2 or CUL5), a catalytic subunit (either RBX1 or RNF7/RBX2), as well as a substrate adapter protein that can be either ASB2, ASB9, ASB11, KLHDC2, KLHDC3, KLHDC10, APPBP2, FEM1A, FEM1B, FEM1C, LRR1, PCMTD1, SOCS1, SOCS2, SOCS5, SPSB1, SPSB3, ELOA, VHL, WSB1 or RAB40C. As part of the Elongin BC E3 ubiquitin ligase complex; interacts with NRBP1. May also interact with DCUN1D1, DCUN1D2, DCUN1D3 and DCUN1D5. May form oligomers as a KLHDC2/KLHDC3-ELOB-ELOC complex; this interaction is autoinhibitory for the E3 ligase complex as the substrate-binding site of KLHDC2/KLHDC3 is blocked in the oligomer.

The protein resides in the nucleus. It participates in protein modification; protein ubiquitination. SIII, also known as elongin, is a general transcription elongation factor that increases the RNA polymerase II transcription elongation past template-encoded arresting sites. Subunit A is transcriptionally active and its transcription activity is strongly enhanced by binding to the dimeric complex of the SIII regulatory subunits B and C (elongin BC complex). In embryonic stem cells, the elongin BC complex is recruited by EPOP to Polycomb group (PcG) target genes in order generate genomic region that display both active and repressive chromatin properties, an important feature of pluripotent stem cells. Its function is as follows. Core component of multiple cullin-2 and cullin-5-RING E3 ubiquitin-protein ligase complexes (ECS complexes), which mediate the ubiquitination of target proteins. By binding to BC-box motifs it seems to link target recruitment subunits, like VHL and members of the SOCS box family, to Cullin/RBX1 modules that activate E2 ubiquitination enzymes. Component the von Hippel-Lindau ubiquitination complex CBC(VHL). A number of ECS complexes (containing either KLHDC2, KLHDC3, KLHDC10, APPBP2, FEM1A, FEM1B or FEM1C as substrate-recognition component) are part of the DesCEND (destruction via C-end degrons) pathway, which recognizes a C-degron located at the extreme C terminus of target proteins, leading to their ubiquitination and degradation. The ECS(ASB9) complex mediates ubiquitination and degradation of CKB. As part of a multisubunit ubiquitin ligase complex, polyubiquitinates monoubiquitinated POLR2A. ECS(LRR1) ubiquitinates MCM7 and promotes CMG replisome disassembly by VCP and chromatin extraction during S-phase. As part of the ECS(RAB40C) complex, mediates ANKRD28 ubiquitination and degradation, thereby inhibiting protein phosphatase 6 (PP6) complex activity and focal adhesion assembly during cell migration. This chain is Elongin-B, found in Mus musculus (Mouse).